Reading from the N-terminus, the 148-residue chain is UPF0260 protein Spro_2751 (148 aa).

It belongs to the UPF0260 family.

The sequence is that of UPF0260 protein Spro_2751 from Serratia proteamaculans (strain 568).